A 202-amino-acid polypeptide reads, in one-letter code: Imidazoleglycerol-phosphate dehydratase (202 aa).

It belongs to the imidazoleglycerol-phosphate dehydratase family.

The protein localises to the cytoplasm. The catalysed reaction is D-erythro-1-(imidazol-4-yl)glycerol 3-phosphate = 3-(imidazol-4-yl)-2-oxopropyl phosphate + H2O. The protein operates within amino-acid biosynthesis; L-histidine biosynthesis; L-histidine from 5-phospho-alpha-D-ribose 1-diphosphate: step 6/9. The sequence is that of Imidazoleglycerol-phosphate dehydratase from Corynebacterium glutamicum (strain ATCC 13032 / DSM 20300 / JCM 1318 / BCRC 11384 / CCUG 27702 / LMG 3730 / NBRC 12168 / NCIMB 10025 / NRRL B-2784 / 534).